A 204-amino-acid polypeptide reads, in one-letter code: LexA repressor (204 aa).

The H-T-H motif DNA-binding region spans valine 28–aspartate 48. Residues serine 126 and lysine 164 each act as for autocatalytic cleavage activity in the active site.

It belongs to the peptidase S24 family. Homodimer.

It catalyses the reaction Hydrolysis of Ala-|-Gly bond in repressor LexA.. Represses a number of genes involved in the response to DNA damage (SOS response), including recA and lexA. In the presence of single-stranded DNA, RecA interacts with LexA causing an autocatalytic cleavage which disrupts the DNA-binding part of LexA, leading to derepression of the SOS regulon and eventually DNA repair. This Exiguobacterium sibiricum (strain DSM 17290 / CCUG 55495 / CIP 109462 / JCM 13490 / 255-15) protein is LexA repressor.